Consider the following 772-residue polypeptide: NAD(P)H-quinone oxidoreductase subunit 5, chloroplastic (772 aa).

Transmembrane regions (helical) follow at residues 8 to 28 (IWIV…GLFF), 39 to 59 (ICAI…FSIF), 87 to 107 (FLID…GILV), 120 to 140 (GYVR…GLVL), 147 to 167 (IYIF…FWFS), 185 to 205 (GDFG…SFDI), 219 to 239 (NGVN…GPAA), 258 to 278 (TPIS…FFVA), 291 to 311 (MNII…IALA), 395 to 415 (GTTF…ACFW), 425 to 445 (WIAS…TGFY), 574 to 594 (LFSL…GVPF), 631 to 651 (IPSV…YGPV), 710 to 730 (WIID…GEGM), and 738 to 758 (IPSY…ILII).

The protein belongs to the complex I subunit 5 family. As to quaternary structure, NDH is composed of at least 16 different subunits, 5 of which are encoded in the nucleus.

It localises to the plastid. The protein localises to the chloroplast thylakoid membrane. It carries out the reaction a plastoquinone + NADH + (n+1) H(+)(in) = a plastoquinol + NAD(+) + n H(+)(out). The catalysed reaction is a plastoquinone + NADPH + (n+1) H(+)(in) = a plastoquinol + NADP(+) + n H(+)(out). Its function is as follows. NDH shuttles electrons from NAD(P)H:plastoquinone, via FMN and iron-sulfur (Fe-S) centers, to quinones in the photosynthetic chain and possibly in a chloroplast respiratory chain. The immediate electron acceptor for the enzyme in this species is believed to be plastoquinone. Couples the redox reaction to proton translocation, and thus conserves the redox energy in a proton gradient. The sequence is that of NAD(P)H-quinone oxidoreductase subunit 5, chloroplastic (ndhF) from Angiopteris evecta (Mule's foot fern).